The sequence spans 119 residues: Ribosome-binding factor A (119 aa).

It belongs to the RbfA family. Monomer. Binds 30S ribosomal subunits, but not 50S ribosomal subunits or 70S ribosomes.

The protein resides in the cytoplasm. One of several proteins that assist in the late maturation steps of the functional core of the 30S ribosomal subunit. Associates with free 30S ribosomal subunits (but not with 30S subunits that are part of 70S ribosomes or polysomes). Required for efficient processing of 16S rRNA. May interact with the 5'-terminal helix region of 16S rRNA. The polypeptide is Ribosome-binding factor A (Coxiella burnetii (strain CbuG_Q212) (Coxiella burnetii (strain Q212))).